Consider the following 301-residue polypeptide: Sulfate adenylyltransferase subunit 2 (301 aa).

Belongs to the PAPS reductase family. CysD subfamily. In terms of assembly, heterodimer composed of CysD, the smaller subunit, and CysN.

The enzyme catalyses sulfate + ATP + H(+) = adenosine 5'-phosphosulfate + diphosphate. It functions in the pathway sulfur metabolism; hydrogen sulfide biosynthesis; sulfite from sulfate: step 1/3. In terms of biological role, with CysN forms the ATP sulfurylase (ATPS) that catalyzes the adenylation of sulfate producing adenosine 5'-phosphosulfate (APS) and diphosphate, the first enzymatic step in sulfur assimilation pathway. APS synthesis involves the formation of a high-energy phosphoric-sulfuric acid anhydride bond driven by GTP hydrolysis by CysN coupled to ATP hydrolysis by CysD. This Geobacter metallireducens (strain ATCC 53774 / DSM 7210 / GS-15) protein is Sulfate adenylyltransferase subunit 2.